The sequence spans 228 residues: Leucyl/phenylalanyl-tRNA--protein transferase (228 aa).

Belongs to the L/F-transferase family.

The protein localises to the cytoplasm. The catalysed reaction is N-terminal L-lysyl-[protein] + L-leucyl-tRNA(Leu) = N-terminal L-leucyl-L-lysyl-[protein] + tRNA(Leu) + H(+). The enzyme catalyses N-terminal L-arginyl-[protein] + L-leucyl-tRNA(Leu) = N-terminal L-leucyl-L-arginyl-[protein] + tRNA(Leu) + H(+). It catalyses the reaction L-phenylalanyl-tRNA(Phe) + an N-terminal L-alpha-aminoacyl-[protein] = an N-terminal L-phenylalanyl-L-alpha-aminoacyl-[protein] + tRNA(Phe). Its function is as follows. Functions in the N-end rule pathway of protein degradation where it conjugates Leu, Phe and, less efficiently, Met from aminoacyl-tRNAs to the N-termini of proteins containing an N-terminal arginine or lysine. This is Leucyl/phenylalanyl-tRNA--protein transferase from Sulfurimonas denitrificans (strain ATCC 33889 / DSM 1251) (Thiomicrospira denitrificans (strain ATCC 33889 / DSM 1251)).